Reading from the N-terminus, the 61-residue chain is Metallothionein-1C (61 aa).

Residues 1–29 (MDPNCSCSTGGSCSCAGSCTCKACRCTSC) form a beta region. The a divalent metal cation site is built by Cys5, Cys7, Cys13, Cys15, Cys19, Cys21, Cys24, Cys26, Cys29, Cys33, Cys34, Cys36, Cys37, Cys41, Cys44, Cys48, Cys50, Cys57, Cys59, and Cys60. The tract at residues 30-61 (KKSCCSCCPAGCARCAQGCICKGASDKCSCCA) is alpha.

It belongs to the metallothionein superfamily. Type 1 family. Monomer.

Its function is as follows. Metallothioneins have a high content of cysteine residues that bind various heavy metals; these proteins are transcriptionally regulated by both heavy metals and glucocorticoids. This chain is Metallothionein-1C (MT1C), found in Sus scrofa (Pig).